Here is a 271-residue protein sequence, read N- to C-terminus: Shikimate kinase (271 aa).

83–93 (PIAMGLKSSSA) is a binding site for ATP.

The protein belongs to the GHMP kinase family. Archaeal shikimate kinase subfamily.

The protein localises to the cytoplasm. It catalyses the reaction shikimate + ATP = 3-phosphoshikimate + ADP + H(+). It participates in metabolic intermediate biosynthesis; chorismate biosynthesis; chorismate from D-erythrose 4-phosphate and phosphoenolpyruvate: step 5/7. The sequence is that of Shikimate kinase from Thermococcus kodakarensis (strain ATCC BAA-918 / JCM 12380 / KOD1) (Pyrococcus kodakaraensis (strain KOD1)).